A 203-amino-acid polypeptide reads, in one-letter code: 5-formyltetrahydrofolate cyclo-ligase (203 aa).

Position 2 is an N-acetylalanine (A2). Residues 10–14 (KRGLR) and R14 each bind ATP. Residues L56, E61, and 148-152 (RGKGY) each bind substrate. An ATP-binding site is contributed by 145-153 (RLGRGKGYY). 2 residues coordinate Mg(2+): D154 and D189.

It belongs to the 5-formyltetrahydrofolate cyclo-ligase family. In terms of assembly, monomer. Mg(2+) is required as a cofactor.

The protein resides in the cytoplasm. It carries out the reaction (6S)-5-formyl-5,6,7,8-tetrahydrofolate + ATP = (6R)-5,10-methenyltetrahydrofolate + ADP + phosphate. In terms of biological role, contributes to tetrahydrofolate metabolism. Helps regulate carbon flow through the folate-dependent one-carbon metabolic network that supplies carbon for the biosynthesis of purines, thymidine and amino acids. Catalyzes the irreversible conversion of 5-formyltetrahydrofolate (5-CHO-H(4)PteGlu) to yield 5,10-methenyltetrahydrofolate. In Mus musculus (Mouse), this protein is 5-formyltetrahydrofolate cyclo-ligase (Mthfs).